The following is a 244-amino-acid chain: NAD(P)H-quinone oxidoreductase subunit K (244 aa).

Positions 60, 61, 125, and 156 each coordinate [4Fe-4S] cluster. The segment at 213–244 (KSEKSIESSKLNPVEESSENIYETNSIDEVIK) is disordered. Residues 231-244 (ENIYETNSIDEVIK) are compositionally biased toward polar residues.

This sequence belongs to the complex I 20 kDa subunit family. As to quaternary structure, NDH-1 can be composed of about 15 different subunits; different subcomplexes with different compositions have been identified which probably have different functions. [4Fe-4S] cluster serves as cofactor.

It localises to the cellular thylakoid membrane. It carries out the reaction a plastoquinone + NADH + (n+1) H(+)(in) = a plastoquinol + NAD(+) + n H(+)(out). The enzyme catalyses a plastoquinone + NADPH + (n+1) H(+)(in) = a plastoquinol + NADP(+) + n H(+)(out). Its function is as follows. NDH-1 shuttles electrons from an unknown electron donor, via FMN and iron-sulfur (Fe-S) centers, to quinones in the respiratory and/or the photosynthetic chain. The immediate electron acceptor for the enzyme in this species is believed to be plastoquinone. Couples the redox reaction to proton translocation, and thus conserves the redox energy in a proton gradient. Cyanobacterial NDH-1 also plays a role in inorganic carbon-concentration. The polypeptide is NAD(P)H-quinone oxidoreductase subunit K (Prochlorococcus marinus subsp. pastoris (strain CCMP1986 / NIES-2087 / MED4)).